Here is a 480-residue protein sequence, read N- to C-terminus: 6-phosphogluconate dehydrogenase, decarboxylating 1 (480 aa).

Residues 10–15, 33–35, 77–79, and N105 contribute to the NADP(+) site; these read GLAVMG, NRT, and VKA. Residues N105 and 131 to 133 contribute to the substrate site; that span reads SGG. The Proton acceptor role is filled by K186. 189 to 190 is a binding site for substrate; that stretch reads HN. E193 acts as the Proton donor in catalysis. Substrate is bound by residues Y194, K264, R291, R450, and H456.

The protein belongs to the 6-phosphogluconate dehydrogenase family. As to quaternary structure, homodimer. Highly expressed in inflorescence, lowly expressed in root and embryos and almost absent in leaves.

It is found in the cytoplasm. It carries out the reaction 6-phospho-D-gluconate + NADP(+) = D-ribulose 5-phosphate + CO2 + NADPH. Its pathway is carbohydrate degradation; pentose phosphate pathway; D-ribulose 5-phosphate from D-glucose 6-phosphate (oxidative stage): step 3/3. Its function is as follows. Catalyzes the oxidative decarboxylation of 6-phosphogluconate to ribulose 5-phosphate and CO(2), with concomitant reduction of NADP to NADPH. The chain is 6-phosphogluconate dehydrogenase, decarboxylating 1 (G6PGH1) from Oryza sativa subsp. japonica (Rice).